The primary structure comprises 107 residues: Circadian clock oscillator protein KaiB (107 aa).

The protein belongs to the KaiB family. In terms of assembly, may undergo a major conformational rearrangment; in the free state forms homooligomers. When bound to KaiC switches to a monomeric thioredoxin-fold (KaiB(fs)). The active oscillator complex is probably KaiC(6):KaiB(6).

Functionally, component of the KaiBC clock protein complex, which constitutes the main circadian regulator in cyanobacteria; it may modify the ATPase activity of KaiC. Its function is as follows. Does not stimulate dephosphorylation of endogenous KaiC, although it does stimulate dephosphorylation of KiaC from S.elongatus strain PCC 7942. Reduces the ATPase activity of KaiC by about half in vitro, which may be its function in vivo. May be a metamorphic protein which reversibly switches between an inactive tetrameric fold and a rare, thioredoxin-like monomeric fold (KaiB(fs)). KaiB(fs) binds phospho-KaiC, and perhaps clock output effectors. This Prochlorococcus marinus subsp. pastoris (strain CCMP1986 / NIES-2087 / MED4) protein is Circadian clock oscillator protein KaiB.